The following is a 612-amino-acid chain: Dihydroxy-acid dehydratase (612 aa).

Asp-81 is a Mg(2+) binding site. Cys-122 is a [2Fe-2S] cluster binding site. Mg(2+) contacts are provided by Asp-123 and Lys-124. The residue at position 124 (Lys-124) is an N6-carboxylysine. Position 193 (Cys-193) interacts with [2Fe-2S] cluster. Position 489 (Glu-489) interacts with Mg(2+). Ser-515 (proton acceptor) is an active-site residue.

It belongs to the IlvD/Edd family. In terms of assembly, homodimer. [2Fe-2S] cluster serves as cofactor. It depends on Mg(2+) as a cofactor.

It catalyses the reaction (2R)-2,3-dihydroxy-3-methylbutanoate = 3-methyl-2-oxobutanoate + H2O. The catalysed reaction is (2R,3R)-2,3-dihydroxy-3-methylpentanoate = (S)-3-methyl-2-oxopentanoate + H2O. The protein operates within amino-acid biosynthesis; L-isoleucine biosynthesis; L-isoleucine from 2-oxobutanoate: step 3/4. It functions in the pathway amino-acid biosynthesis; L-valine biosynthesis; L-valine from pyruvate: step 3/4. Its function is as follows. Functions in the biosynthesis of branched-chain amino acids. Catalyzes the dehydration of (2R,3R)-2,3-dihydroxy-3-methylpentanoate (2,3-dihydroxy-3-methylvalerate) into 2-oxo-3-methylpentanoate (2-oxo-3-methylvalerate) and of (2R)-2,3-dihydroxy-3-methylbutanoate (2,3-dihydroxyisovalerate) into 2-oxo-3-methylbutanoate (2-oxoisovalerate), the penultimate precursor to L-isoleucine and L-valine, respectively. This is Dihydroxy-acid dehydratase from Xanthomonas euvesicatoria pv. vesicatoria (strain 85-10) (Xanthomonas campestris pv. vesicatoria).